Here is a 255-residue protein sequence, read N- to C-terminus: Indole-3-glycerol phosphate synthase (255 aa).

Belongs to the TrpC family.

The catalysed reaction is 1-(2-carboxyphenylamino)-1-deoxy-D-ribulose 5-phosphate + H(+) = (1S,2R)-1-C-(indol-3-yl)glycerol 3-phosphate + CO2 + H2O. Its pathway is amino-acid biosynthesis; L-tryptophan biosynthesis; L-tryptophan from chorismate: step 4/5. The protein is Indole-3-glycerol phosphate synthase of Shouchella clausii (strain KSM-K16) (Alkalihalobacillus clausii).